Here is a 467-residue protein sequence, read N- to C-terminus: Cilia- and flagella-associated protein 97 (467 aa).

Disordered regions lie at residues 1–20 (MDRY…FFDS), 76–235 (IAKP…DISP), 336–370 (RQAA…KEQQ), and 412–467 (ALSP…AAWQ). A compositionally biased stretch (acidic residues) spans 124–135 (DNYYPDEEDSSE). Residues 162 to 177 (DFVSTISSSDTEYSDT) show a composition bias toward polar residues. Over residues 180–194 (DDGASKSSYQSSKGS) the composition is skewed to low complexity. Residues 198–216 (SPERKPSRSSMRELRHYAE) are compositionally biased toward basic and acidic residues. Polar residues predominate over residues 223–235 (TDVTPLSTPDISP). A coiled-coil region spans residues 310 to 387 (KKNFSFSNDE…ALLKRLESVK (78 aa)). The span at 421-439 (SVSRLSPSVSSGGFSRMSS) shows a compositional bias: low complexity.

The protein belongs to the CFAP97 family.

The chain is Cilia- and flagella-associated protein 97 from Xenopus tropicalis (Western clawed frog).